The sequence spans 366 residues: Peptide chain release factor 2 (366 aa).

Position 253 is an N5-methylglutamine (Gln253).

The protein belongs to the prokaryotic/mitochondrial release factor family. In terms of processing, methylated by PrmC. Methylation increases the termination efficiency of RF2.

It is found in the cytoplasm. In terms of biological role, peptide chain release factor 2 directs the termination of translation in response to the peptide chain termination codons UGA and UAA. In Yersinia pseudotuberculosis serotype I (strain IP32953), this protein is Peptide chain release factor 2.